The sequence spans 566 residues: Alpha-N-acetylgalactosaminide alpha-2,6-sialyltransferase 1 (566 aa).

Residues Met-1 to Arg-16 are Cytoplasmic-facing. Residues Trp-17–Met-37 traverse the membrane as a helical; Signal-anchor for type II membrane protein segment. The Lumenal segment spans residues Glu-38–Ser-566. N-linked (GlcNAc...) asparagine glycosylation is found at Asn-66 and Asn-132. A disordered region spans residues Ala-138–Gly-161. Asn-192 is a glycosylation site (N-linked (GlcNAc...) asparagine). Repeat 1 spans residues Ser-247–Cys-254. The interval Ser-247–Cys-337 is 2 X 8 AA repeats of S-S-S-X-V-S-T-C. Disulfide bonds link Cys-254/Cys-337 and Cys-340/Cys-508. Asn-275, Asn-286, Asn-306, Asn-329, and Asn-333 each carry an N-linked (GlcNAc...) asparagine glycan. Repeat 2 spans residues Ser-330–Cys-337.

The protein belongs to the glycosyltransferase 29 family. Heart, kidney, testes, brain, liver and lung.

The protein localises to the golgi apparatus membrane. It catalyses the reaction a beta-D-galactosyl-(1-&gt;3)-N-acetyl-alpha-D-galactosaminyl derivative + CMP-N-acetyl-beta-neuraminate = a beta-D-galactosyl-(1-&gt;3)-[N-acetyl-alpha-neuraminyl-(2-&gt;6)]-N-acetyl-alpha-D-galactosaminyl derivative + CMP + H(+). The enzyme catalyses a 3-O-[N-acetyl-alpha-D-galactosaminyl]-L-seryl-[protein] + CMP-N-acetyl-beta-neuraminate = a 3-O-[N-acetyl-alpha-neuraminosyl-(2-&gt;6)-N-acetyl-alpha-D-galactosaminyl]-L-seryl-[protein] + CMP + H(+). It carries out the reaction a 3-O-[N-acetyl-alpha-D-galactosaminyl]-L-threonyl-[protein] + CMP-N-acetyl-beta-neuraminate = a 3-O-[N-acetyl-alpha-neuraminosyl-(2-&gt;6)-N-acetyl-alpha-D-galactosaminyl]-L-threonyl-[protein] + CMP + H(+). The catalysed reaction is a 3-O-[beta-D-galactosyl-(1-&gt;3)-N-acetyl-alpha-D-galactosaminyl]-L-seryl-[protein] + CMP-N-acetyl-beta-neuraminate = a 3-O-{beta-D-galactosyl-(1-&gt;3)-[N-acetyl-alpha-neuraminosyl-(2-&gt;6)]-N-acetyl-alpha-D-galactosaminyl}-L-seryl-[protein] + CMP + H(+). It catalyses the reaction a 3-O-[beta-D-galactosyl-(1-&gt;3)-N-acetyl-alpha-D-galactosaminyl]-L-threonyl-[protein] + CMP-N-acetyl-beta-neuraminate = a 3-O-{beta-D-galactosyl-(1-&gt;3)-[N-acetyl-alpha-neuraminosyl-(2-&gt;6)]-N-acetyl-alpha-D-galactosaminyl}-L-threonyl-[protein] + CMP + H(+). The enzyme catalyses a 3-O-[N-acetyl-alpha-neuraminyl-(2-&gt;3)-beta-D-galactosyl-(1-&gt;3)-N-acetyl-alpha-D-galactosaminyl]-L-threonyl-[protein] + CMP-N-acetyl-beta-neuraminate = a 3-O-{alpha-Neu5Ac-(2-&gt;3)-beta-D-Gal-(1-&gt;3)-[alpha-Neu5Ac-(2-&gt;6)]-alpha-D-GalNAc}-L-threonyl-[protein] + CMP + H(+). It functions in the pathway protein modification; protein glycosylation. Functionally, protein sialyltransferase specifically expressed in goblet cells that plays a key role in intestinal host-commensal homeostasis. Conjugates sialic acid with an alpha-2-6 linkage to N-acetylgalactosamine (GalNAc) glycan chains linked to serine or threonine in glycoproteins. Generates sialylated T and Tn antigens.. The protein is Alpha-N-acetylgalactosaminide alpha-2,6-sialyltransferase 1 (ST6GALNAC1) of Gallus gallus (Chicken).